The following is a 396-amino-acid chain: Elongation factor Tu (396 aa).

The tr-type G domain occupies 10–206; the sequence is KPHCNIGTIG…QVDAYIPQPE (197 aa). The G1 stretch occupies residues 19–26; the sequence is GHVDHGKT. 19–26 is a binding site for GTP; that stretch reads GHVDHGKT. Thr-26 is a binding site for Mg(2+). Residues 60–64 form a G2 region; the sequence is GITIS. The tract at residues 81 to 84 is G3; the sequence is DCPG. Residues 81–85 and 136–139 contribute to the GTP site; these read DCPGH and NKCD. Positions 136 to 139 are G4; sequence NKCD. The interval 174 to 176 is G5; that stretch reads SAL.

Belongs to the TRAFAC class translation factor GTPase superfamily. Classic translation factor GTPase family. EF-Tu/EF-1A subfamily. In terms of assembly, monomer.

The protein localises to the cytoplasm. It catalyses the reaction GTP + H2O = GDP + phosphate + H(+). GTP hydrolase that promotes the GTP-dependent binding of aminoacyl-tRNA to the A-site of ribosomes during protein biosynthesis. The chain is Elongation factor Tu from Rhodopseudomonas palustris (strain ATCC BAA-98 / CGA009).